A 582-amino-acid polypeptide reads, in one-letter code: Hydrogen peroxide stress regulator 1 (582 aa).

4 disordered regions span residues 24–55 (SPFA…HNSS), 107–154 (YPSA…GISK), 347–366 (TSYN…SGET), and 375–422 (NTSG…GGKS). Positions 107–125 (YPSASFSTSQHPSQVYNDG) are enriched in polar residues. Residues 126–143 (STLNSNNTTQQLNNNNGF) are compositionally biased toward low complexity. Over residues 375-392 (NTSGRSPNSMEATEQIGT) the composition is skewed to polar residues. Residues 423–446 (FVCPECSKKFKRSEHLRRHIRSLH) form a C2H2-type 1 zinc finger. The C2H2-type 2; atypical zinc-finger motif lies at 452 to 473 (FVCICGKRFSRRDNLRQHERLH).

It is found in the nucleus. In terms of biological role, transcription factor that globally supports gene expression in response to hydrogen peroxide. This is Hydrogen peroxide stress regulator 1 (hsr1) from Schizosaccharomyces pombe (strain 972 / ATCC 24843) (Fission yeast).